Reading from the N-terminus, the 553-residue chain is 3-amino-2-hydroxy-4-methoxybenzoate diazotase (553 aa).

The span at 157–167 (ALPAAGATGPA) shows a compositional bias: low complexity. The disordered stretch occupies residues 157-178 (ALPAAGATGPAREGDAPPPAPV).

This sequence belongs to the ATP-dependent AMP-binding enzyme family.

The enzyme catalyses 3-amino-2-hydroxy-4-methoxybenzoate + nitrite + ATP = cremeomycin + AMP + diphosphate + H2O. Its pathway is antibiotic biosynthesis. Part of a gene cluster involved in the biosynthesis of cremeomycin, a light-sensitive o-diazoquinone with antibacterial and antiproliferative effects. Catalyzes the last step of cremeomycin biosynthesis, the diazotization of 3-amino-2-hydroxy-4-methoxybenzoate (3,2,4-AHMBA) with nitrite to generate cremeomycin. The chain is 3-amino-2-hydroxy-4-methoxybenzoate diazotase from Streptomyces cremeus.